The chain runs to 384 residues: GDSL esterase/lipase ENOD8 (384 aa).

A signal peptide spans 1-31 (MKFMAKIELSRHIPLVTLIVLVLCITPPIFA). The Nucleophile role is filled by serine 46. Asparagine 105, asparagine 191, asparagine 198, asparagine 276, and asparagine 330 each carry an N-linked (GlcNAc...) asparagine glycan. Active-site residues include aspartate 349 and histidine 352.

This sequence belongs to the 'GDSL' lipolytic enzyme family. In terms of tissue distribution, expressed in root nodules (at protein level).

It localises to the symbiosome. Functionally, has lipase and esterase activities. Probably involved in root nodule physiology. The chain is GDSL esterase/lipase ENOD8 from Medicago truncatula (Barrel medic).